A 212-amino-acid chain; its full sequence is Large ribosomal subunit protein uL1 (212 aa).

It belongs to the universal ribosomal protein uL1 family. As to quaternary structure, part of the 50S ribosomal subunit.

Binds directly to 23S rRNA. Probably involved in E site tRNA release. Functionally, protein L1 is also a translational repressor protein, it controls the translation of its operon by binding to its mRNA. The polypeptide is Large ribosomal subunit protein uL1 (Methanothrix thermoacetophila (strain DSM 6194 / JCM 14653 / NBRC 101360 / PT) (Methanosaeta thermophila)).